Here is a 116-residue protein sequence, read N- to C-terminus: Large ribosomal subunit protein uL24 (116 aa).

It belongs to the universal ribosomal protein uL24 family. In terms of assembly, part of the 50S ribosomal subunit.

Functionally, one of two assembly initiator proteins, it binds directly to the 5'-end of the 23S rRNA, where it nucleates assembly of the 50S subunit. Its function is as follows. Located at the polypeptide exit tunnel on the outside of the subunit. The sequence is that of Large ribosomal subunit protein uL24 from Methanosarcina barkeri (strain Fusaro / DSM 804).